The sequence spans 122 residues: Ribosome-binding factor A (122 aa).

The protein belongs to the RbfA family. Monomer. Binds 30S ribosomal subunits, but not 50S ribosomal subunits or 70S ribosomes.

It localises to the cytoplasm. In terms of biological role, one of several proteins that assist in the late maturation steps of the functional core of the 30S ribosomal subunit. Associates with free 30S ribosomal subunits (but not with 30S subunits that are part of 70S ribosomes or polysomes). Required for efficient processing of 16S rRNA. May interact with the 5'-terminal helix region of 16S rRNA. In Opitutus terrae (strain DSM 11246 / JCM 15787 / PB90-1), this protein is Ribosome-binding factor A.